The primary structure comprises 246 residues: 5'-nucleotidase SurE (246 aa).

Residues aspartate 8, aspartate 9, serine 39, and asparagine 91 each coordinate a divalent metal cation.

Belongs to the SurE nucleotidase family. The cofactor is a divalent metal cation.

The protein resides in the cytoplasm. The enzyme catalyses a ribonucleoside 5'-phosphate + H2O = a ribonucleoside + phosphate. Functionally, nucleotidase that shows phosphatase activity on nucleoside 5'-monophosphates. The chain is 5'-nucleotidase SurE from Dechloromonas aromatica (strain RCB).